The sequence spans 819 residues: MEDMAYSVEIDRKWQKIWEETKLYKFNPENVDKKLYCLEMFPYPSGAKLHIGHWYNYGPTDSWARMKRMQGYEVFHPMGFDAFGLPAENYAIKTGIHPYDSTMENIRTMERQLREMGVTFDWDYEIITCLPEYYKWTQWIFLKLYEAGLAYRKKAPVNWCPSCQTVLANEQVIDGKCERCGTEVTKKELTQWFFKITAYAEELLEKLDDLDWPEKTKMMQRNWIGKSEGAEIEFKIDGKDLSFRVFTTRADTLFGATYVVLAPEHELVDLITTEEYKEAVEEYKEYAKKQSEIERLSTEKEKTGVFTGAYAIHPLTGEKLPIWIADYVLVTYGTGCVMGVPGHDERDYEFATKYNLPIKRVIKGVGDVDDSLPFVEYGILVNSEEFTGMTSEEARVKIVEKLKAEGKAEFKVNYRMRDWLVSRQRYWGAPIPIIHCERCGIVPVPEEDLPVLLPYDVEFEPTGESPLKKHAGFMNVTCPKCGGPALRDPDTLDTFVDSSWYYLRYPDNKNDKEPFNKEWINKMLPVDKYVGGAEHATMHLLYSRFITKVLRDLGYLNFDEPFLSLVHQGTILGPDGSRMSKSRGNVISPDDYIKQYGSDVFRLYLMFGFSYSEGGPWSDEGIKAIARFVNRVERFIEKFIETRQNPGKTKEEMEDAEKELNYVRHYTIKHVTLDADKFEFNTAIARIMELVNALYKYENEVEVKNMKFYEDVVRDFVKILAPFAPHFSEEMWERLGYEYSVFNQKWPEWDEKALERDMIEIAIQVNGKVRSKAQVPSNATDEELKQIALSDERVKSYLDGKEIKKVIIVKNRLVNIVVN.

The short motif at 42–53 (PYPSGAKLHIGH) is the 'HIGH' region element. Positions 578-582 (RMSKS) match the 'KMSKS' region motif. ATP is bound at residue lysine 581.

Belongs to the class-I aminoacyl-tRNA synthetase family.

The protein localises to the cytoplasm. It catalyses the reaction tRNA(Leu) + L-leucine + ATP = L-leucyl-tRNA(Leu) + AMP + diphosphate. This is Leucine--tRNA ligase from Caldanaerobacter subterraneus subsp. tengcongensis (strain DSM 15242 / JCM 11007 / NBRC 100824 / MB4) (Thermoanaerobacter tengcongensis).